The chain runs to 125 residues: Fumarate reductase subunit D (125 aa).

A run of 3 helical transmembrane segments spans residues 30–50, 62–82, and 105–125; these read FAML…LGVI, AFAT…LPMW, and VACY…IFMI.

The protein belongs to the FrdD family. As to quaternary structure, part of an enzyme complex containing four subunits: a flavoprotein (FrdA), an iron-sulfur protein (FrdB), and two hydrophobic anchor proteins (FrdC and FrdD).

It is found in the cell inner membrane. Its function is as follows. Anchors the catalytic components of the fumarate reductase complex to the cell membrane, binds quinones. The polypeptide is Fumarate reductase subunit D (Vibrio parahaemolyticus serotype O3:K6 (strain RIMD 2210633)).